We begin with the raw amino-acid sequence, 254 residues long: 7-cyano-7-deazaguanine synthase (254 aa).

Residue 30 to 40 (YSGGQDSATCL) participates in ATP binding. The Zn(2+) site is built by Cys-218, Cys-233, Cys-236, and Cys-239.

The protein belongs to the QueC family. The cofactor is Zn(2+).

It carries out the reaction 7-carboxy-7-deazaguanine + NH4(+) + ATP = 7-cyano-7-deazaguanine + ADP + phosphate + H2O + H(+). The protein operates within purine metabolism; 7-cyano-7-deazaguanine biosynthesis. Its function is as follows. Catalyzes the ATP-dependent conversion of 7-carboxy-7-deazaguanine (CDG) to 7-cyano-7-deazaguanine (preQ(0)). This is 7-cyano-7-deazaguanine synthase from Zymomonas mobilis subsp. mobilis (strain ATCC 31821 / ZM4 / CP4).